Consider the following 264-residue polypeptide: tRNA-uridine aminocarboxypropyltransferase A (264 aa).

4 residues coordinate Zn(2+): C25, C28, C35, and C37. A DXTW motif is present at residues 144-147; that stretch reads DATW. The disordered stretch occupies residues 245–264; it reads RPKLLKKRFQNQQPLEQEEE. Residues 254-264 show a composition bias toward polar residues; that stretch reads QNQQPLEQEEE.

It belongs to the TDD superfamily. DTWD2 family.

It catalyses the reaction a uridine in tRNA + S-adenosyl-L-methionine = a 3-[(3S)-3-amino-3-carboxypropyl]uridine in tRNA + S-methyl-5'-thioadenosine + H(+). In terms of biological role, catalyzes the formation of 3-(3-amino-3-carboxypropyl)uridine (acp3U) at position 20a in the D-loop of several cytoplasmic tRNAs (acp3U(20a)). The sequence is that of tRNA-uridine aminocarboxypropyltransferase A from Arabidopsis thaliana (Mouse-ear cress).